The chain runs to 208 residues: Guanylate kinase (208 aa).

Positions 4-182 constitute a Guanylate kinase-like domain; sequence GQLYIISAPS…ALEELKSVFR (179 aa). Residue 11-18 participates in ATP binding; that stretch reads APSGAGKT.

The protein belongs to the guanylate kinase family.

It is found in the cytoplasm. It catalyses the reaction GMP + ATP = GDP + ADP. Its function is as follows. Essential for recycling GMP and indirectly, cGMP. In Hahella chejuensis (strain KCTC 2396), this protein is Guanylate kinase.